The sequence spans 395 residues: Imidazolonepropionase (395 aa).

Residues H63 and H65 each coordinate Fe(3+). Residues H63 and H65 each coordinate Zn(2+). Residues R72, Y135, and H168 each contribute to the 4-imidazolone-5-propanoate site. Y135 serves as a coordination point for N-formimidoyl-L-glutamate. H233 serves as a coordination point for Fe(3+). H233 is a Zn(2+) binding site. Residue Q236 coordinates 4-imidazolone-5-propanoate. Fe(3+) is bound at residue D308. Residue D308 coordinates Zn(2+). The N-formimidoyl-L-glutamate site is built by N310 and G312. T313 contributes to the 4-imidazolone-5-propanoate binding site.

The protein belongs to the metallo-dependent hydrolases superfamily. HutI family. Zn(2+) is required as a cofactor. Fe(3+) serves as cofactor.

The protein resides in the cytoplasm. The enzyme catalyses 4-imidazolone-5-propanoate + H2O = N-formimidoyl-L-glutamate. It functions in the pathway amino-acid degradation; L-histidine degradation into L-glutamate; N-formimidoyl-L-glutamate from L-histidine: step 3/3. Its function is as follows. Catalyzes the hydrolytic cleavage of the carbon-nitrogen bond in imidazolone-5-propanoate to yield N-formimidoyl-L-glutamate. It is the third step in the universal histidine degradation pathway. The sequence is that of Imidazolonepropionase from Cereibacter sphaeroides (strain ATCC 17029 / ATH 2.4.9) (Rhodobacter sphaeroides).